Reading from the N-terminus, the 104-residue chain is Large ribosomal subunit protein bL21 (104 aa).

This sequence belongs to the bacterial ribosomal protein bL21 family. Part of the 50S ribosomal subunit. Contacts protein L20.

Its function is as follows. This protein binds to 23S rRNA in the presence of protein L20. The polypeptide is Large ribosomal subunit protein bL21 (Streptococcus sanguinis (strain SK36)).